A 735-amino-acid polypeptide reads, in one-letter code: Probable ATP-dependent RNA helicase DHR2 (735 aa).

Over residues 1 to 13 (MAANSNSRVASNH) the composition is skewed to polar residues. The disordered stretch occupies residues 1–29 (MAANSNSRVASNHTSKKQKVRRNIHPFTN). A compositionally biased stretch (basic residues) spans 14–24 (TSKKQKVRRNI). A Helicase ATP-binding domain is found at 91–257 (MSYIESNPVT…FNNAPILFVE (167 aa)). An ATP-binding site is contributed by 104-111 (GETGSGKS). A DEAH box motif is present at residues 203-206 (DEAH). A Helicase C-terminal domain is found at 262-456 (DVKQYYLKAP…SPVLMLKRYG (195 aa)).

The protein belongs to the DEAD box helicase family. DEAH subfamily. In terms of assembly, interacts with NOP19. Interacts with UBP10.

The protein localises to the nucleus. It localises to the nucleolus. It catalyses the reaction ATP + H2O = ADP + phosphate + H(+). Functionally, probable ATP-binding RNA helicase. Required for 18S rRNA synthesis. This Saccharomyces cerevisiae (strain ATCC 204508 / S288c) (Baker's yeast) protein is Probable ATP-dependent RNA helicase DHR2 (DHR2).